The primary structure comprises 486 residues: Differentially expressed in FDCP 8 homolog (486 aa).

The segment at 1–26 (MSSWCSSEDAHNQSSTPSTRSRKSSW) is disordered. 2 consecutive Phorbol-ester/DAG-type zinc fingers follow at residues 160-212 (GHEF…KRVC) and 393-459 (IHTV…SLNC).

It belongs to the DEF8 family.

This is Differentially expressed in FDCP 8 homolog from Caenorhabditis elegans.